Reading from the N-terminus, the 135-residue chain is MSSIIRKVISTTKAPAAIGPYSQAVQVDRTIYISGQVGLDPSSGQLVPGGVVEEAKQALKNLGEILKAAGCDFNNVVKTTVLLADMNDFGTVNEIYKTYFQGSLPARAAYQVAALPRGSRVEIEAIAVQGPFIKA.

An N-acetylserine modification is found at S2. An N6-succinyllysine mark is found at K13, K60, K67, and K134.

It belongs to the RutC family. Homotrimer. Interacts with YTHDF2. Expressed predominantly in liver and kidney. Lower levels in lung and brain.

It localises to the cytoplasm. The protein localises to the nucleus. It is found in the peroxisome. Its subcellular location is the mitochondrion. The catalysed reaction is 2-iminobutanoate + H2O = 2-oxobutanoate + NH4(+). It carries out the reaction 2-iminopropanoate + H2O = pyruvate + NH4(+). Its function is as follows. Catalyzes the hydrolytic deamination of enamine/imine intermediates that form during the course of normal metabolism. May facilitate the release of ammonia from these potentially toxic reactive metabolites, reducing their impact on cellular components. It may act on enamine/imine intermediates formed by several types of pyridoxal-5'-phosphate-dependent dehydratases including L-threonine dehydratase. In terms of biological role, also promotes endoribonucleolytic cleavage of some transcripts by promoting recruitment of the ribonuclease P/MRP complex. Acts by bridging YTHDF2 and the ribonuclease P/MRP complex. RIDA/HRSP12 binds to N6-methyladenosine (m6A)-containing mRNAs containing a 5'-GGUUC-3' motif: cooperative binding of RIDA/HRSP12 and YTHDF2 to such transcripts lead to recruitment of the ribonuclease P/MRP complex and subsequent endoribonucleolytic cleavage. This chain is 2-iminobutanoate/2-iminopropanoate deaminase, found in Mus musculus (Mouse).